The chain runs to 354 residues: Uroporphyrinogen decarboxylase (354 aa).

Substrate contacts are provided by residues 27–31 (RQAGR), Asp-77, Tyr-154, Thr-209, and His-327.

This sequence belongs to the uroporphyrinogen decarboxylase family. As to quaternary structure, homodimer.

The protein resides in the cytoplasm. It carries out the reaction uroporphyrinogen III + 4 H(+) = coproporphyrinogen III + 4 CO2. It functions in the pathway porphyrin-containing compound metabolism; protoporphyrin-IX biosynthesis; coproporphyrinogen-III from 5-aminolevulinate: step 4/4. Catalyzes the decarboxylation of four acetate groups of uroporphyrinogen-III to yield coproporphyrinogen-III. The protein is Uroporphyrinogen decarboxylase of Edwardsiella ictaluri (strain 93-146).